A 303-amino-acid chain; its full sequence is Protein bottleneck (303 aa).

2 disordered regions span residues 102–142 and 185–272; these read SKRN…PTVT and VATT…ASVR. 2 stretches are compositionally biased toward low complexity: residues 115 to 138 and 185 to 197; these read RQQEQRQPQEQPLQQEELQHQQQE and VATTTANSSTANS. The span at 260-272 shows a compositional bias: polar residues; that stretch reads ATISRQSSSASVR.

As to expression, restricted to the blastoderm.

Its subcellular location is the cytoplasm. It is found in the cytoskeleton. In terms of biological role, acts as a regulator of the microfilament network governing cellularization of the embryo. Determines the timing of a key conformational transition in the cortical microfilament network: the proper coordination of membrane invagination and basal closure of the cells. To do this, bnk possibly physically links neighboring contractile units of the early cycle 14 microfilament network in a manner that prevents basal constriction until the proper stage has been reached. Bnk together with nullo and Sry-alpha may provide auxiliary functions, by acting both to stabilize a large and dynamic microfilament structure and regulate its functions. In Drosophila melanogaster (Fruit fly), this protein is Protein bottleneck (bnk).